Consider the following 103-residue polypeptide: Phorbol-12-myristate-13-acetate-induced protein 1 (103 aa).

2 short sequence motifs (BH3) span residues 27 to 35 (LRKIGDKVY) and 78 to 86 (LRRIGDKVN). The interval 90-99 (KLLNLISKLF) is required for mitochondrial location.

It belongs to the PMAIP1 family. In terms of assembly, interacts with MCL1. Interacts with BCL2A1. Interacts with BAX. Interacts with BCL2L10. Detected in thymocytes after irradiation with X-rays. Not detectable in untreated thymocytes (at protein level). Detected in embryonic neural precursor cells of the telencephalon Constitutively expressed at low levels in adult brain, testis, thymus, spleen, lung and kidney.

The protein localises to the mitochondrion. In terms of biological role, promotes activation of caspases and apoptosis. Promotes mitochondrial membrane changes and efflux of apoptogenic proteins from the mitochondria. Contributes to p53/TP53-dependent apoptosis after radiation exposure. Promotes proteasomal degradation of MCL1. Competes with BIM/BCL2L11 for binding to MCL1 and can displace BIM/BCL2L11 from its binding site on MCL1. Competes with BAK1 for binding to MCL1 and can displace BAK1 from its binding site on MCL1. The sequence is that of Phorbol-12-myristate-13-acetate-induced protein 1 (Pmaip1) from Mus musculus (Mouse).